The chain runs to 341 residues: Phenylalanine--tRNA ligase alpha subunit (341 aa).

Position 252 (glutamate 252) interacts with Mg(2+).

It belongs to the class-II aminoacyl-tRNA synthetase family. Phe-tRNA synthetase alpha subunit type 1 subfamily. As to quaternary structure, tetramer of two alpha and two beta subunits. It depends on Mg(2+) as a cofactor.

The protein localises to the cytoplasm. It catalyses the reaction tRNA(Phe) + L-phenylalanine + ATP = L-phenylalanyl-tRNA(Phe) + AMP + diphosphate + H(+). The sequence is that of Phenylalanine--tRNA ligase alpha subunit from Malacoplasma penetrans (strain HF-2) (Mycoplasma penetrans).